The sequence spans 497 residues: Histone-lysine N-methyltransferase ASHR3 (497 aa).

The segment at 118-186 (MVDCLVCHKP…QWRCVKCPMA (69 aa)) adopts a PHD-type zinc-finger fold. The region spanning 283-326 (DGVGCTNCGPNCDRSCVCRVQCISCSKGCSCPESCGNRPFRKEK) is the AWS domain. Positions 326–443 (KKIKIVKTEH…AGEPLTYDYR (118 aa)) constitute an SET domain. The 17-residue stretch at 449–465 (PEVKCNCGSENCQGYLG) folds into the Post-SET domain.

Belongs to the class V-like SAM-binding methyltransferase superfamily. Histone-lysine methyltransferase family. SET2 subfamily. As to quaternary structure, interacts with AMS/bHLH21 by its SET domain and PHD finger. Expressed in roots, flowers and buds, the anther and in stamen filaments.

It is found in the nucleus. The protein resides in the chromosome. It carries out the reaction L-lysyl-[histone] + S-adenosyl-L-methionine = N(6)-methyl-L-lysyl-[histone] + S-adenosyl-L-homocysteine + H(+). Its function is as follows. Histone methyltransferase. Involved in stamen development. The chain is Histone-lysine N-methyltransferase ASHR3 (ASHR3) from Arabidopsis thaliana (Mouse-ear cress).